Consider the following 165-residue polypeptide: Biosynthetic peptidoglycan transglycosylase (165 aa).

Belongs to the glycosyltransferase 51 family.

Its subcellular location is the cell inner membrane. It catalyses the reaction [GlcNAc-(1-&gt;4)-Mur2Ac(oyl-L-Ala-gamma-D-Glu-L-Lys-D-Ala-D-Ala)](n)-di-trans,octa-cis-undecaprenyl diphosphate + beta-D-GlcNAc-(1-&gt;4)-Mur2Ac(oyl-L-Ala-gamma-D-Glu-L-Lys-D-Ala-D-Ala)-di-trans,octa-cis-undecaprenyl diphosphate = [GlcNAc-(1-&gt;4)-Mur2Ac(oyl-L-Ala-gamma-D-Glu-L-Lys-D-Ala-D-Ala)](n+1)-di-trans,octa-cis-undecaprenyl diphosphate + di-trans,octa-cis-undecaprenyl diphosphate + H(+). Its pathway is cell wall biogenesis; peptidoglycan biosynthesis. Peptidoglycan polymerase that catalyzes glycan chain elongation from lipid-linked precursors. The sequence is that of Biosynthetic peptidoglycan transglycosylase from Neisseria meningitidis.